A 340-amino-acid polypeptide reads, in one-letter code: Citramalyl-CoA lyase, mitochondrial (340 aa).

The transit peptide at 1-22 directs the protein to the mitochondrion; the sequence is MALRLLRRAARGAAAAALLRLK. Residues Y50, K57, and K61 each contribute to the substrate site. An N6-acetyllysine mark is found at K57 and K61. 2 positions are modified to N6-acetyllysine; alternate: K82 and K92. K82 and K92 each carry N6-succinyllysine; alternate. R107 provides a ligand contact to substrate. The Mg(2+) site is built by E171 and D206. 272 to 273 provides a ligand contact to substrate; sequence IH. K309 carries the N6-succinyllysine modification. The active site involves D320.

This sequence belongs to the HpcH/HpaI aldolase family. Citrate lyase beta subunit-like subfamily. In terms of assembly, homotrimer. It depends on Mg(2+) as a cofactor.

The protein localises to the mitochondrion. It catalyses the reaction glyoxylate + acetyl-CoA + H2O = (S)-malate + CoA + H(+). It carries out the reaction propanoyl-CoA + glyoxylate + H2O = 3-methylmalate + CoA + H(+). The catalysed reaction is (3S)-citramalyl-CoA = pyruvate + acetyl-CoA. The enzyme catalyses (S)-malyl-CoA + H2O = (S)-malate + CoA + H(+). Functionally, mitochondrial citramalyl-CoA lyase indirectly involved in the vitamin B12 metabolism. Converts citramalyl-CoA into acetyl-CoA and pyruvate in the C5-dicarboxylate catabolism pathway. The C5-dicarboxylate catabolism pathway is required to detoxify itaconate, a vitamin B12-poisoning metabolite. Also acts as a malate synthase in vitro, converting glyoxylate and acetyl-CoA to malate. Also displays malyl-CoA thioesterase activity. Also acts as a beta-methylmalate synthase in vitro, by mediating conversion of glyoxylate and propionyl-CoA to beta-methylmalate. Also has very weak citramalate synthase activity in vitro. This chain is Citramalyl-CoA lyase, mitochondrial, found in Homo sapiens (Human).